Here is a 544-residue protein sequence, read N- to C-terminus: Protein angel homolog 2 (544 aa).

Belongs to the CCR4/nocturin family.

The polypeptide is Protein angel homolog 2 (ANGEL2) (Homo sapiens (Human)).